Consider the following 181-residue polypeptide: PLAT domain-containing protein 1 (181 aa).

The N-terminal stretch at 1-14 (MARRDVLLPFLLLL) is a signal peptide. Ala15 carries the post-translational modification N-acetylalanine. Residues 29–156 (CVYTFYLRTG…SPYELTAVRN (128 aa)) form the PLAT domain.

Expressed in root tips, pericycle cells, lateral root primordia, stomata, leaf vasculature, hydathodes and floral organs.

It localises to the endoplasmic reticulum. It is found in the plastid. The protein localises to the chloroplast. The protein resides in the plastoglobule. Functionally, positive regulator of abiotic stress tolerance involved in the regulation of plant growth. May be a downstream target of the abscisic acid (ABA) signaling pathway. This chain is PLAT domain-containing protein 1, found in Arabidopsis thaliana (Mouse-ear cress).